We begin with the raw amino-acid sequence, 462 residues long: tRNA modification GTPase MnmE (462 aa).

Arg-23, Glu-88, and Arg-127 together coordinate (6S)-5-formyl-5,6,7,8-tetrahydrofolate. A TrmE-type G domain is found at 224–383 (GLATVIIGRP…LEKAIADLFF (160 aa)). Asn-234 provides a ligand contact to K(+). GTP-binding positions include 234 to 239 (NVGKSS), 253 to 259 (TDIPGTT), and 278 to 281 (DTAG). Mg(2+) is bound at residue Ser-238. K(+)-binding residues include Thr-253, Ile-255, and Thr-258. Thr-259 serves as a coordination point for Mg(2+). Lys-462 is a (6S)-5-formyl-5,6,7,8-tetrahydrofolate binding site.

It belongs to the TRAFAC class TrmE-Era-EngA-EngB-Septin-like GTPase superfamily. TrmE GTPase family. In terms of assembly, homodimer. Heterotetramer of two MnmE and two MnmG subunits. K(+) serves as cofactor.

Its subcellular location is the cytoplasm. Exhibits a very high intrinsic GTPase hydrolysis rate. Involved in the addition of a carboxymethylaminomethyl (cmnm) group at the wobble position (U34) of certain tRNAs, forming tRNA-cmnm(5)s(2)U34. This Geobacillus kaustophilus (strain HTA426) protein is tRNA modification GTPase MnmE.